The primary structure comprises 332 residues: Autoinducer 2 import system permease protein LsrD (332 aa).

A run of 10 helical transmembrane segments spans residues 7 to 27, 45 to 65, 70 to 90, 91 to 111, 118 to 138, 162 to 182, 216 to 236, 240 to 260, 261 to 281, and 288 to 308; these read YSWE…FGLI, ICIG…GMDI, TIGL…PLPL, AIII…GLII, LVIT…LSGM, FLGI…FWLL, VYAM…SYFG, SDLG…GGAN, IYGG…VGFL, and AGVP…VVVV.

The protein belongs to the binding-protein-dependent transport system permease family. AraH/RbsC subfamily. In terms of assembly, the complex is composed of two ATP-binding proteins (LsrA), two transmembrane proteins (LsrC and LsrD) and a solute-binding protein (LsrB).

The protein resides in the cell inner membrane. Part of the ABC transporter complex LsrABCD involved in autoinducer 2 (AI-2) import. Probably responsible for the translocation of the substrate across the membrane. In Salmonella typhi, this protein is Autoinducer 2 import system permease protein LsrD (lsrD).